Here is a 95-residue protein sequence, read N- to C-terminus: Small ribosomal subunit protein bS20 (95 aa).

This sequence belongs to the bacterial ribosomal protein bS20 family.

Its function is as follows. Binds directly to 16S ribosomal RNA. This chain is Small ribosomal subunit protein bS20, found in Ehrlichia ruminantium (strain Gardel).